The chain runs to 105 residues: Large ribosomal subunit protein uL24 (105 aa).

This sequence belongs to the universal ribosomal protein uL24 family. In terms of assembly, part of the 50S ribosomal subunit.

Its function is as follows. One of two assembly initiator proteins, it binds directly to the 5'-end of the 23S rRNA, where it nucleates assembly of the 50S subunit. One of the proteins that surrounds the polypeptide exit tunnel on the outside of the subunit. This is Large ribosomal subunit protein uL24 from Mycolicibacterium vanbaalenii (strain DSM 7251 / JCM 13017 / BCRC 16820 / KCTC 9966 / NRRL B-24157 / PYR-1) (Mycobacterium vanbaalenii).